A 1286-amino-acid polypeptide reads, in one-letter code: Ankyrin-repeat and fibronectin type III domain-containing 1 (1286 aa).

ANK repeat units lie at residues Q274–L303 and E311–P340. The Fibronectin type-III domain occupies V411–S507. The highly conserved peptide sequence stretch occupies residues G748–K755. Positions S999–S1011 are enriched in polar residues. 4 disordered regions span residues S999 to C1032, K1086 to H1106, A1187 to P1207, and A1242 to L1286. Residues S1260–P1277 are compositionally biased toward low complexity.

As to expression, expressed in both the suprachiasmatic nucleus and dorsal medial hypothalamus.

In terms of biological role, may play a role in neuronal function. The sequence is that of Ankyrin-repeat and fibronectin type III domain-containing 1 from Mus musculus (Mouse).